A 302-amino-acid polypeptide reads, in one-letter code: Cardiolipin synthase (CMP-forming) (302 aa).

The disordered stretch occupies residues 65–84 (PRTHCSGAGKAAPEPAAGGD). Residues 71 to 84 (GAGKAAPEPAAGGD) are compositionally biased toward low complexity. 5 consecutive transmembrane segments (helical) span residues 109-129 (IPNLLSMTRIGLAPVLGYLIL), 133-153 (FNVALGVFALAGLTDLLDGFI), 190-212 (IPVPLTYMIISRDVMLIAAVFYV), 250-270 (LILVAASLAAPVFNYADSIYL), and 271-289 (QILWCCTAFTTAASAYSYY).

It belongs to the CDP-alcohol phosphatidyltransferase class-I family. Requires a divalent metal cation as cofactor.

Its subcellular location is the mitochondrion inner membrane. The catalysed reaction is a CDP-1,2-diacyl-sn-glycerol + a 1,2-diacyl-sn-glycero-3-phospho-(1'-sn-glycerol) = a cardiolipin + CMP + H(+). In terms of biological role, catalyzes the synthesis of cardiolipin (CL) (diphosphatidylglycerol) by specifically transferring a phosphatidyl group from CDP-diacylglycerol to phosphatidylglycerol (PG). CL is a key phospholipid in mitochondrial membranes and plays important roles in maintaining the functional integrity and dynamics of mitochondria under both optimal and stress conditions. This Rattus norvegicus (Rat) protein is Cardiolipin synthase (CMP-forming) (Crls1).